A 152-amino-acid chain; its full sequence is Protein Smg homolog (152 aa).

This sequence belongs to the Smg family.

The chain is Protein Smg homolog from Nitrosomonas europaea (strain ATCC 19718 / CIP 103999 / KCTC 2705 / NBRC 14298).